The following is a 61-amino-acid chain: UPF0434 protein PA14_25520 (61 aa).

Belongs to the UPF0434 family.

The polypeptide is UPF0434 protein PA14_25520 (Pseudomonas aeruginosa (strain UCBPP-PA14)).